A 508-amino-acid chain; its full sequence is Photosystem II CP47 reaction center protein (508 aa).

6 helical membrane passes run 21–36 (SVHI…WAGS), 101–115 (IMFS…IWHW), 140–156 (GIHL…FGAF), 203–218 (IAAG…FHLS), 237–252 (VLSS…AFVV), and 457–472 (SFAL…HGAR).

This sequence belongs to the PsbB/PsbC family. PsbB subfamily. PSII is composed of 1 copy each of membrane proteins PsbA, PsbB, PsbC, PsbD, PsbE, PsbF, PsbH, PsbI, PsbJ, PsbK, PsbL, PsbM, PsbT, PsbX, PsbY, PsbZ, Psb30/Ycf12, at least 3 peripheral proteins of the oxygen-evolving complex and a large number of cofactors. It forms dimeric complexes. Binds multiple chlorophylls. PSII binds additional chlorophylls, carotenoids and specific lipids. serves as cofactor.

It is found in the plastid. Its subcellular location is the chloroplast thylakoid membrane. In terms of biological role, one of the components of the core complex of photosystem II (PSII). It binds chlorophyll and helps catalyze the primary light-induced photochemical processes of PSII. PSII is a light-driven water:plastoquinone oxidoreductase, using light energy to abstract electrons from H(2)O, generating O(2) and a proton gradient subsequently used for ATP formation. The chain is Photosystem II CP47 reaction center protein from Guizotia abyssinica (Niger).